The following is a 389-amino-acid chain: Acetoin utilization protein AcuC (389 aa).

It belongs to the histone deacetylase family.

The protein operates within ketone degradation; acetoin degradation. In terms of biological role, role in growth on acetoin or butanediol. Involved in the breakdown of these compounds used as a carbon source. The sequence is that of Acetoin utilization protein AcuC (acuC) from Staphylococcus aureus (strain Mu50 / ATCC 700699).